The primary structure comprises 406 residues: Succinylornithine transaminase (406 aa).

K252 bears the N6-(pyridoxal phosphate)lysine mark.

It belongs to the class-III pyridoxal-phosphate-dependent aminotransferase family. AstC subfamily. It depends on pyridoxal 5'-phosphate as a cofactor.

The catalysed reaction is N(2)-succinyl-L-ornithine + 2-oxoglutarate = N-succinyl-L-glutamate 5-semialdehyde + L-glutamate. It participates in amino-acid degradation; L-arginine degradation via AST pathway; L-glutamate and succinate from L-arginine: step 3/5. Catalyzes the transamination of N(2)-succinylornithine and alpha-ketoglutarate into N(2)-succinylglutamate semialdehyde and glutamate. Can also act as an acetylornithine aminotransferase. The chain is Succinylornithine transaminase from Escherichia fergusonii (strain ATCC 35469 / DSM 13698 / CCUG 18766 / IAM 14443 / JCM 21226 / LMG 7866 / NBRC 102419 / NCTC 12128 / CDC 0568-73).